A 72-amino-acid polypeptide reads, in one-letter code: Large ribosomal subunit protein bL31 (72 aa).

The Zn(2+) site is built by Cys-16, Cys-18, Cys-37, and Cys-40.

It belongs to the bacterial ribosomal protein bL31 family. Type A subfamily. In terms of assembly, part of the 50S ribosomal subunit. The cofactor is Zn(2+).

Binds the 23S rRNA. This Buchnera aphidicola subsp. Schizaphis graminum (strain Sg) protein is Large ribosomal subunit protein bL31.